The following is a 262-amino-acid chain: Snake venom serine protease catroxase-1 (262 aa).

Residues M1 to A18 form the signal peptide. Residues Q19 to P24 constitute a propeptide that is removed on maturation. One can recognise a Peptidase S1 domain in the interval I25–A250. 6 disulfide bridges follow: C31/C162, C49/C65, C97/C257, C141/C211, C173/C190, and C201/C226. H64 serves as the catalytic Charge relay system. N102 carries N-linked (GlcNAc...) asparagine glycosylation. D109 acts as the Charge relay system in catalysis. The N-linked (GlcNAc...) asparagine glycan is linked to N169. S205 serves as the catalytic Charge relay system.

The protein belongs to the peptidase S1 family. Snake venom subfamily. In terms of assembly, monomer. As to expression, expressed by the venom gland.

The protein localises to the secreted. Functionally, snake venom serine protease that may act in the hemostasis system of the prey. In Crotalus atrox (Western diamondback rattlesnake), this protein is Snake venom serine protease catroxase-1.